We begin with the raw amino-acid sequence, 335 residues long: MPRRYLLDFEKPLVELEKQIEQIRELARDSEVDVSQQLLQLETLATRRREEIFRSLTPAQKIQVARHPQRPSTLDFIQMFCDDWIELHGDRNGGDDMALIGGLGSVNNQPVLLLGHQKGRDTKENVVRNFGMAKPGGYRKALRLMQHADRFSLPILSFIDTPGAYAGLSAEEQGQGEAIARNLREMFGFKVPIIATIIGEGGSGGALGIGVADRLLMFEHSVYTVASPEACASILWRDAAKAPEAATALKITGKDLLELGVIDEVLSEPAGGNNWAPIEAGNTLKASIERHLSELLKMSKEELLEQRYSKFRVLGKFIESSSVEEIKEEFTQKKE.

Residues 40 to 294 (QLETLATRRR…KASIERHLSE (255 aa)) form the CoA carboxyltransferase C-terminal domain.

Belongs to the AccA family. Acetyl-CoA carboxylase is a heterohexamer composed of biotin carboxyl carrier protein (AccB), biotin carboxylase (AccC) and two subunits each of ACCase subunit alpha (AccA) and ACCase subunit beta (AccD).

The protein localises to the cytoplasm. It catalyses the reaction N(6)-carboxybiotinyl-L-lysyl-[protein] + acetyl-CoA = N(6)-biotinyl-L-lysyl-[protein] + malonyl-CoA. It functions in the pathway lipid metabolism; malonyl-CoA biosynthesis; malonyl-CoA from acetyl-CoA: step 1/1. Functionally, component of the acetyl coenzyme A carboxylase (ACC) complex. First, biotin carboxylase catalyzes the carboxylation of biotin on its carrier protein (BCCP) and then the CO(2) group is transferred by the carboxyltransferase to acetyl-CoA to form malonyl-CoA. The polypeptide is Acetyl-coenzyme A carboxylase carboxyl transferase subunit alpha (Prochlorococcus marinus (strain MIT 9515)).